The chain runs to 93 residues: CRISPR-associated endoribonuclease Cas2 1 (93 aa).

Aspartate 8 is a Mg(2+) binding site.

Belongs to the CRISPR-associated endoribonuclease Cas2 protein family. In terms of assembly, homodimer, forms a heterotetramer with a Cas1 homodimer. Requires Mg(2+) as cofactor.

Functionally, CRISPR (clustered regularly interspaced short palindromic repeat), is an adaptive immune system that provides protection against mobile genetic elements (viruses, transposable elements and conjugative plasmids). CRISPR clusters contain sequences complementary to antecedent mobile elements and target invading nucleic acids. CRISPR clusters are transcribed and processed into CRISPR RNA (crRNA). Functions as a ssRNA-specific endoribonuclease. Involved in the integration of spacer DNA into the CRISPR cassette. This chain is CRISPR-associated endoribonuclease Cas2 1, found in Chloroflexus aurantiacus (strain ATCC 29366 / DSM 635 / J-10-fl).